The following is a 289-amino-acid chain: Acetyl-coenzyme A carboxylase carboxyl transferase subunit beta (289 aa).

The CoA carboxyltransferase N-terminal domain maps to 28–289; sequence VMTKCPKCKK…QGGEMAVWQS (262 aa). Cys32, Cys35, Cys51, and Cys54 together coordinate Zn(2+). The C4-type zinc-finger motif lies at 32–54; that stretch reads CPKCKKIMYTKELLKNLKVCVNC.

This sequence belongs to the AccD/PCCB family. Acetyl-CoA carboxylase is a heterohexamer composed of biotin carboxyl carrier protein (AccB), biotin carboxylase (AccC) and two subunits each of ACCase subunit alpha (AccA) and ACCase subunit beta (AccD). Zn(2+) serves as cofactor.

The protein localises to the cytoplasm. The catalysed reaction is N(6)-carboxybiotinyl-L-lysyl-[protein] + acetyl-CoA = N(6)-biotinyl-L-lysyl-[protein] + malonyl-CoA. It functions in the pathway lipid metabolism; malonyl-CoA biosynthesis; malonyl-CoA from acetyl-CoA: step 1/1. Its function is as follows. Component of the acetyl coenzyme A carboxylase (ACC) complex. Biotin carboxylase (BC) catalyzes the carboxylation of biotin on its carrier protein (BCCP) and then the CO(2) group is transferred by the transcarboxylase to acetyl-CoA to form malonyl-CoA. This chain is Acetyl-coenzyme A carboxylase carboxyl transferase subunit beta, found in Bacillus cereus (strain AH187).